Consider the following 179-residue polypeptide: Ribosome-recycling factor (179 aa).

This sequence belongs to the RRF family.

It is found in the cytoplasm. Functionally, responsible for the release of ribosomes from messenger RNA at the termination of protein biosynthesis. May increase the efficiency of translation by recycling ribosomes from one round of translation to another. In Chlamydia trachomatis serovar A (strain ATCC VR-571B / DSM 19440 / HAR-13), this protein is Ribosome-recycling factor.